The following is a 392-amino-acid chain: Metacaspase-1 (392 aa).

Residues 1 to 14 (MYPGSGNYSYNNRP) are compositionally biased toward polar residues. The segment at 1–87 (MYPGSGNYSY…PSSIQQGNGQ (87 aa)) is disordered. Residues 41 to 51 (QQQQYQDQYQG) are compositionally biased toward low complexity. A compositionally biased stretch (polar residues) spans 53 to 63 (NRGQYQGQYQD). Active-site residues include His-182 and Cys-238.

It belongs to the peptidase C14B family.

In terms of biological role, involved in cell death (apoptosis). The sequence is that of Metacaspase-1 (MCA1) from Candida glabrata (strain ATCC 2001 / BCRC 20586 / JCM 3761 / NBRC 0622 / NRRL Y-65 / CBS 138) (Yeast).